A 149-amino-acid chain; its full sequence is 3-hydroxyacyl-[acyl-carrier-protein] dehydratase FabZ (149 aa).

His-53 is an active-site residue.

This sequence belongs to the thioester dehydratase family. FabZ subfamily.

The protein localises to the cytoplasm. The enzyme catalyses a (3R)-hydroxyacyl-[ACP] = a (2E)-enoyl-[ACP] + H2O. Involved in unsaturated fatty acids biosynthesis. Catalyzes the dehydration of short chain beta-hydroxyacyl-ACPs and long chain saturated and unsaturated beta-hydroxyacyl-ACPs. The chain is 3-hydroxyacyl-[acyl-carrier-protein] dehydratase FabZ from Polynucleobacter necessarius subsp. necessarius (strain STIR1).